The sequence spans 144 residues: Large ribosomal subunit protein uL15 (144 aa).

Positions 1–12 (MRLNTLSPSLGS) are enriched in polar residues. The tract at residues 1–51 (MRLNTLSPSLGSRKNHKRLGRGIGSGFGKTAGRGHKGQKSRSGGHVNRGFE) is disordered. Gly residues predominate over residues 21 to 31 (RGIGSGFGKTA).

Belongs to the universal ribosomal protein uL15 family. As to quaternary structure, part of the 50S ribosomal subunit.

In terms of biological role, binds to the 23S rRNA. In Buchnera aphidicola subsp. Schizaphis graminum (strain Sg), this protein is Large ribosomal subunit protein uL15.